The primary structure comprises 1093 residues: uncharacterized protein (1093 aa).

This is an uncharacterized protein from Escherichia coli (strain K12).